The chain runs to 228 residues: Cytochrome c oxidase subunit 2 (228 aa).

The Mitochondrial intermembrane segment spans residues 1 to 26 (MATWANLGLQDSSSPLMEQLNFFHDH). Residues 27–47 (TLLILTMITILVGYIMGMLMF) traverse the membrane as a helical segment. Over 48–60 (NQFTNRYLLHGQT) the chain is Mitochondrial matrix. A helical membrane pass occupies residues 61 to 81 (IEIIWTVLPAIILMFIALPSL). Topologically, residues 82-228 (RLLYLMDEIN…FIKWITNMTN (147 aa)) are mitochondrial intermembrane. Residues His-161, Cys-196, Glu-198, Cys-200, His-204, and Met-207 each coordinate Cu cation. Position 198 (Glu-198) interacts with Mg(2+).

Belongs to the cytochrome c oxidase subunit 2 family. As to quaternary structure, component of the cytochrome c oxidase (complex IV, CIV), a multisubunit enzyme composed of a catalytic core of 3 subunits and several supernumerary subunits. The complex exists as a monomer or a dimer and forms supercomplexes (SCs) in the inner mitochondrial membrane with ubiquinol-cytochrome c oxidoreductase (cytochrome b-c1 complex, complex III, CIII). Cu cation is required as a cofactor.

The protein localises to the mitochondrion inner membrane. It carries out the reaction 4 Fe(II)-[cytochrome c] + O2 + 8 H(+)(in) = 4 Fe(III)-[cytochrome c] + 2 H2O + 4 H(+)(out). Functionally, component of the cytochrome c oxidase, the last enzyme in the mitochondrial electron transport chain which drives oxidative phosphorylation. The respiratory chain contains 3 multisubunit complexes succinate dehydrogenase (complex II, CII), ubiquinol-cytochrome c oxidoreductase (cytochrome b-c1 complex, complex III, CIII) and cytochrome c oxidase (complex IV, CIV), that cooperate to transfer electrons derived from NADH and succinate to molecular oxygen, creating an electrochemical gradient over the inner membrane that drives transmembrane transport and the ATP synthase. Cytochrome c oxidase is the component of the respiratory chain that catalyzes the reduction of oxygen to water. Electrons originating from reduced cytochrome c in the intermembrane space (IMS) are transferred via the dinuclear copper A center (CU(A)) of subunit 2 and heme A of subunit 1 to the active site in subunit 1, a binuclear center (BNC) formed by heme A3 and copper B (CU(B)). The BNC reduces molecular oxygen to 2 water molecules using 4 electrons from cytochrome c in the IMS and 4 protons from the mitochondrial matrix. The protein is Cytochrome c oxidase subunit 2 (COXII) of Anopheles quadrimaculatus (Common malaria mosquito).